The primary structure comprises 1184 residues: Protein stu1 (1184 aa).

HEAT repeat units follow at residues 92–130 and 162–194; these read FCPV…EHYV and RSYV…FQGA. Basic and acidic residues-rich tracts occupy residues 229–240 and 308–317; these read SSTARPRSRVEP and EAEKAPHMET. The interval 229-336 is disordered; it reads SSTARPRSRV…APQPLHAETS (108 aa). Residues 463–499 form an HEAT 3 repeat; the sequence is VTYTPRLLQHVTSACQDKNAQLRLFAAGWLKTLLNKQ. Disordered regions lie at residues 564 to 584 and 602 to 906; these read LEKD…SDTL and ARLA…RVEE. Residues 572-584 show a composition bias toward polar residues; the sequence is NRDQSSYLSSDTL. Over residues 640–649 the composition is skewed to low complexity; that stretch reads APLSSLSSAP. The span at 723 to 737 shows a compositional bias: polar residues; the sequence is SASNENETQVATQVA. Composition is skewed to basic and acidic residues over residues 787 to 811 and 882 to 895; these read AGRH…ENKL and EQDR…DSAE.

Belongs to the CLASP family. As to quaternary structure, interacts with microtubules.

It localises to the cytoplasm. Its subcellular location is the cytoskeleton. The protein localises to the nucleus. The protein resides in the spindle. Its function is as follows. Microtubule binding protein that promotes the stabilization of dynamic microtubules. Required for mitotic spindle formation. The sequence is that of Protein stu1 (stu1) from Aspergillus oryzae (strain ATCC 42149 / RIB 40) (Yellow koji mold).